Here is a 921-residue protein sequence, read N- to C-terminus: Sodium/calcium exchanger 2 (921 aa).

The first 20 residues, 1 to 20, serve as a signal peptide directing secretion; that stretch reads MAPLALMGVVLLLGVPHCLG. Positions 23–42 are disordered; the sequence is TPTPSLPPPTANDSDASPEG. A helical transmembrane segment spans residues 69-89; sequence VARAVVYFVAMVYMFLGVSII. N-linked (GlcNAc...) asparagine glycosylation is found at Asn125 and Asn130. The next 4 membrane-spanning stretches (helical) occupy residues 131-151, 165-185, 197-217, and 226-246; these read LTLMALGSSAPEILLTVIEVC, IVGSAAFNMFVVIAVCVYVIP, VFFVTASWSIFAYVWLYLILA, and VWEALLTLIFFPVCVVFAWMA. Positions 248–267 are putative calmodulin-binding region; the sequence is KRLLFYKYVYKRYRTDPRSG. The disordered stretch occupies residues 371–391; sequence HAADAARRPGATDGAPDDEDD. 2 Calx-beta domains span residues 389–482 and 512–611; these read EDDG…FVRL and ATVT…FIEL. Residues Glu407, Asp443, Asp468, Asp469, Ile471, Glu473, Glu476, Asp518, Asp519, Asp520, Glu536, Asp598, Glu599, and Glu600 each contribute to the Ca(2+) site. Ser622 carries the post-translational modification Phosphoserine. Glu665 provides a ligand contact to Ca(2+). The next 6 helical transmembrane spans lie at 721–741, 749–769, 786–806, 823–843, 855–875, and 893–913; these read CFDYVMHFLTVFWKVLFACVP, WACFGVCILVIGVLTALIGDL, VVFVALGTSIPDTFASKVAAL, AVNVFLGLGVAWSVAAVYWAV, LAFSVTLFTVFAFVCIAVLLY, and LATTALFLGLWFLYILFSSLE.

This sequence belongs to the Ca(2+):cation antiporter (CaCA) (TC 2.A.19) family. SLC8 subfamily. Detected in kidney cortex, in distal convoluted tubules and connecting segments. Detected in brain and spinal cord (at protein level). Detected in brain, especially in hippocampus CA1, CA2 and CA3 fiels, dentate gyrus, cerebellum and brain cortex.

The protein resides in the cell membrane. The protein localises to the basolateral cell membrane. It catalyses the reaction Ca(2+)(in) + 3 Na(+)(out) = Ca(2+)(out) + 3 Na(+)(in). Calcium transport is down-regulated by Na(+) and stimulated by Ca(2+). Mediates the electrogenic exchange of Ca(2+) against Na(+) ions across the cell membrane, and thereby contributes to the regulation of cytoplasmic Ca(2+) levels and Ca(2+)-dependent cellular processes. Contributes to cellular Ca(2+) homeostasis in excitable cells. Contributes to the rapid decrease of cytoplasmic Ca(2+) levels back to baseline after neuronal activation, and thereby contributes to modulate synaptic plasticity, learning and memory. Plays a role in regulating urinary Ca(2+) and Na(+) excretion. The protein is Sodium/calcium exchanger 2 of Mus musculus (Mouse).